The sequence spans 378 residues: Probable E3 ubiquitin-protein ligase LUL3 (378 aa).

Residues 1-21 (MGISLSKRRRDNNNNHHHPHH) show a composition bias toward basic residues. Residues 1-79 (MGISLSKRRR…PPSQISYRPY (79 aa)) form a disordered region. Residue glycine 2 is the site of N-myristoyl glycine attachment. Pro residues-rich tracts occupy residues 29-38 (DPPPQQPPPQ) and 55-72 (SLPPPPAQPPSSSQPPPS). The interval 164-283 (FVFDALFDGS…GSFKVKVMKQ (120 aa)) is DAR2 domain. The RING-type; atypical zinc finger occupies 321-360 (CVICLTEPKDTAVMPCRHLCLCSDCAEELRFQTNKCPICR).

The protein belongs to the RING-type zinc finger family. LOG2 subfamily. In terms of processing, myristoylated (in vitro).

It catalyses the reaction S-ubiquitinyl-[E2 ubiquitin-conjugating enzyme]-L-cysteine + [acceptor protein]-L-lysine = [E2 ubiquitin-conjugating enzyme]-L-cysteine + N(6)-ubiquitinyl-[acceptor protein]-L-lysine.. It participates in protein modification; protein ubiquitination. Acts as an E3 ubiquitin-protein ligase, or as part of E3 complex, which accepts ubiquitin from specific E2 ubiquitin-conjugating enzymes and then transfers it to substrates (in vitro). This Arabidopsis thaliana (Mouse-ear cress) protein is Probable E3 ubiquitin-protein ligase LUL3 (LUL3).